The sequence spans 204 residues: Large ribosomal subunit protein bL25 (204 aa).

It belongs to the bacterial ribosomal protein bL25 family. CTC subfamily. As to quaternary structure, part of the 50S ribosomal subunit; part of the 5S rRNA/L5/L18/L25 subcomplex. Contacts the 5S rRNA. Binds to the 5S rRNA independently of L5 and L18.

Functionally, this is one of the proteins that binds to the 5S RNA in the ribosome where it forms part of the central protuberance. The protein is Large ribosomal subunit protein bL25 of Pseudomonas paraeruginosa (strain DSM 24068 / PA7) (Pseudomonas aeruginosa (strain PA7)).